Here is a 252-residue protein sequence, read N- to C-terminus: Ditrans,polycis-undecaprenyl-diphosphate synthase ((2E,6E)-farnesyl-diphosphate specific) (252 aa).

D24 is an active-site residue. Position 24 (D24) interacts with Mg(2+). Residues 25–28 (GNGR), W29, R37, H41, and 69–71 (SSE) contribute to the substrate site. N72 acts as the Proton acceptor in catalysis. 3 residues coordinate substrate: W73, R75, and R192. H197 is a binding site for Mg(2+). Residue 198 to 200 (RIS) coordinates substrate. E211 contributes to the Mg(2+) binding site.

The protein belongs to the UPP synthase family. Homodimer. Mg(2+) serves as cofactor.

It catalyses the reaction 8 isopentenyl diphosphate + (2E,6E)-farnesyl diphosphate = di-trans,octa-cis-undecaprenyl diphosphate + 8 diphosphate. Functionally, catalyzes the sequential condensation of isopentenyl diphosphate (IPP) with (2E,6E)-farnesyl diphosphate (E,E-FPP) to yield (2Z,6Z,10Z,14Z,18Z,22Z,26Z,30Z,34E,38E)-undecaprenyl diphosphate (di-trans,octa-cis-UPP). UPP is the precursor of glycosyl carrier lipid in the biosynthesis of bacterial cell wall polysaccharide components such as peptidoglycan and lipopolysaccharide. In Yersinia pestis, this protein is Ditrans,polycis-undecaprenyl-diphosphate synthase ((2E,6E)-farnesyl-diphosphate specific).